A 360-amino-acid polypeptide reads, in one-letter code: Uroporphyrinogen decarboxylase (360 aa).

Substrate contacts are provided by residues 31–35 (RQAGR), D81, Y157, T212, and H333.

Belongs to the uroporphyrinogen decarboxylase family. As to quaternary structure, homodimer.

It localises to the cytoplasm. The enzyme catalyses uroporphyrinogen III + 4 H(+) = coproporphyrinogen III + 4 CO2. The protein operates within porphyrin-containing compound metabolism; protoporphyrin-IX biosynthesis; coproporphyrinogen-III from 5-aminolevulinate: step 4/4. Functionally, catalyzes the decarboxylation of four acetate groups of uroporphyrinogen-III to yield coproporphyrinogen-III. The polypeptide is Uroporphyrinogen decarboxylase (Herminiimonas arsenicoxydans).